A 376-amino-acid polypeptide reads, in one-letter code: Carbapenem antibiotics biosynthesis protein CarD (376 aa).

The protein belongs to the proline oxidase family.

It participates in antibiotic biosynthesis; carbapenem biosynthesis. This chain is Carbapenem antibiotics biosynthesis protein CarD (carD), found in Pectobacterium carotovorum subsp. carotovorum (Erwinia carotovora subsp. carotovora).